The primary structure comprises 274 residues: Sulfur carrier protein FdhD (274 aa).

Catalysis depends on Cys-121, which acts as the Cysteine persulfide intermediate. 258–263 (FSKPGR) serves as a coordination point for Mo-bis(molybdopterin guanine dinucleotide).

This sequence belongs to the FdhD family.

The protein resides in the cytoplasm. In terms of biological role, required for formate dehydrogenase (FDH) activity. Acts as a sulfur carrier protein that transfers sulfur from IscS to the molybdenum cofactor prior to its insertion into FDH. The protein is Sulfur carrier protein FdhD of Yersinia pseudotuberculosis serotype O:1b (strain IP 31758).